Reading from the N-terminus, the 1379-residue chain is MAQTLSFNGRRRVRKFFGKIPEVAEMPNLIEVQKASYDQFLMVEEPKGGRPDEGLQAVFKSVFPITDFSGASMLEFVSYEFEPPKFDVDECRQRDLTYAAPLKVTLRLIVFDIDEDTGAKSIKDIKEQSVYMGDMPLMTNNGTFIVNGTERVIVSQMHRSPGVFFDHDKGKSHSSGKLLFAARVIPYRGSWLDIEFDAKDIVYARIDRRRKIPVTSLLMALGMDGEEILDTFYTKSLYKRDGEGWRIPFKPETLKGAKAITEMVDADTGEVVVEAGKKLTPRLLRQLSDKGLKALKAGDDDLYGNYLAEDIVNYSTGEIYLEAGDEIDEKTLAVILANGFDEIPVLGIDHINVGAYIRNTLSADKNENRQDALFDIYRVMRPGEPPTMESAEAMFNSLFFDAERYDLSAVGRVKMNMRLDLSVEDTVRTLRKDDILAVVKMLVELRDGKGEIDDIDNLGNRRVRSVGELMENQYRLGLLRMERAIKERMSSIEIDTVMPQDLINAKPAAAAVREFFGSSQLSQFMDQVNPLSEITHKRRLSALGPGGLTRERAGFEVRDVHPTHYGRICPIETPEGPNIGLINSLATFARVNKYGFIESPYRRIVDGKVTNDVLYLSAMEEAKYYVAQANAELNADGSFVDEFVVCRHAGEVMLAPRDSMNLMDVSPKQVVSVAAALIPFLENDDANRALMGSNMQRQAVPLLRAEAPFVGTGMEPVVARDSGAAIGARRGGVVDQVDATRIVIRATEDLEAGKSGVDIYRLQKFQRSNQNTCVNQRPLVTVGDVVNRGDILADGPSTDLGDLALGRNALVAFMPWNGYNYEDSILLSERIVADDVFTSIHIEEFEVMARDTKLGPEEITRDIPNVSEEALKNLDEAGIVYIGAEVQPGDILVGKITPKGESPMTPEEKLLRAIFGEKASDVRDTSMRMPPGTYGTIVEVRVFNRHGVEKDERAMAIEREEIERLAKDRDDEQAILDRNVYGRLIDMLRGQVSIAGPKGFKKGTELSNAVVSEYPRSQWWMFAVEDEKVQSELEALRGQYDESKSRLEQRFMDKVEKVQRGDEMPPGVMKMVKVFVAVKRKIQPGDKMAGRHGNKGVVSRIVPVEDMPFLEDGTHVDVVLNPLGVPSRMNVGQILETHLGWACAGMGRQIGELIEAYKANGNIEPLRKTIGDVVGAGPKAEQVHEFDDESVLRLADQWKRGVSIATPVFDGANEGDVNDMLRLAGLKDTGQSTLYDGRTGEQFDRQVTVGYIYMLKLNHLVDDKIHARSIGPYSLVTQQPLGGKAQFGGQRFGEMEVWALEAYGAAYTLQEMLTVKSDDVAGRTKVYEAIVRGDDTFEAGIPESFNVLVKEMRSLGLSVELENTKLDEAQATQLPDAAE.

Belongs to the RNA polymerase beta chain family. As to quaternary structure, the RNAP catalytic core consists of 2 alpha, 1 beta, 1 beta' and 1 omega subunit. When a sigma factor is associated with the core the holoenzyme is formed, which can initiate transcription.

The catalysed reaction is RNA(n) + a ribonucleoside 5'-triphosphate = RNA(n+1) + diphosphate. Its function is as follows. DNA-dependent RNA polymerase catalyzes the transcription of DNA into RNA using the four ribonucleoside triphosphates as substrates. In Rhizobium etli (strain ATCC 51251 / DSM 11541 / JCM 21823 / NBRC 15573 / CFN 42), this protein is DNA-directed RNA polymerase subunit beta.